We begin with the raw amino-acid sequence, 390 residues long: NADH-quinone oxidoreductase subunit D (390 aa).

Belongs to the complex I 49 kDa subunit family. NDH-1 is composed of 14 different subunits. Subunits NuoB, C, D, E, F, and G constitute the peripheral sector of the complex.

Its subcellular location is the cell inner membrane. The enzyme catalyses a quinone + NADH + 5 H(+)(in) = a quinol + NAD(+) + 4 H(+)(out). Functionally, NDH-1 shuttles electrons from NADH, via FMN and iron-sulfur (Fe-S) centers, to quinones in the respiratory chain. The immediate electron acceptor for the enzyme in this species is believed to be ubiquinone. Couples the redox reaction to proton translocation (for every two electrons transferred, four hydrogen ions are translocated across the cytoplasmic membrane), and thus conserves the redox energy in a proton gradient. This Trichlorobacter lovleyi (strain ATCC BAA-1151 / DSM 17278 / SZ) (Geobacter lovleyi) protein is NADH-quinone oxidoreductase subunit D.